A 233-amino-acid chain; its full sequence is Pathogenesis-related thaumatin-like protein 3.2 (233 aa).

An N-terminal signal peptide occupies residues 1-22; the sequence is MARAMHTVWIALVPTLFVFLQG. 8 cysteine pairs are disulfide-bonded: cysteine 36–cysteine 232, cysteine 77–cysteine 87, cysteine 92–cysteine 98, cysteine 145–cysteine 221, cysteine 151–cysteine 204, cysteine 159–cysteine 169, cysteine 173–cysteine 182, and cysteine 183–cysteine 191. Asparagine 195 carries an N-linked (GlcNAc...) asparagine glycan.

This sequence belongs to the thaumatin family. Strongly expressed in roots and in female and male strobili, and, to a lower extent, in cotyledons, leaves, stems and pollen grains.

Its function is as follows. May be involved in disease resistance. The sequence is that of Pathogenesis-related thaumatin-like protein 3.2 from Cryptomeria japonica (Japanese cedar).